The chain runs to 640 residues: Phosphomethylpyrimidine synthase (640 aa).

Residues asparagine 235, methionine 264, tyrosine 293, histidine 329, 349–351 (SRG), 390–393 (DGLR), and glutamate 429 each bind substrate. Histidine 433 is a binding site for Zn(2+). Residue tyrosine 456 coordinates substrate. Histidine 497 lines the Zn(2+) pocket. Cysteine 577, cysteine 580, and cysteine 585 together coordinate [4Fe-4S] cluster.

It belongs to the ThiC family. In terms of assembly, homodimer. The cofactor is [4Fe-4S] cluster.

The enzyme catalyses 5-amino-1-(5-phospho-beta-D-ribosyl)imidazole + S-adenosyl-L-methionine = 4-amino-2-methyl-5-(phosphooxymethyl)pyrimidine + CO + 5'-deoxyadenosine + formate + L-methionine + 3 H(+). Its pathway is cofactor biosynthesis; thiamine diphosphate biosynthesis. Its function is as follows. Catalyzes the synthesis of the hydroxymethylpyrimidine phosphate (HMP-P) moiety of thiamine from aminoimidazole ribotide (AIR) in a radical S-adenosyl-L-methionine (SAM)-dependent reaction. This is Phosphomethylpyrimidine synthase from Photobacterium profundum (strain SS9).